We begin with the raw amino-acid sequence, 159 residues long: MIILGIDPSLVSTGWGVISISDSMVNYIDSGVIKTVSKDSLVLKLGNISLMIEKLITRFNPFHVAMEEVFINKNYSSSVTLIQARGAIMSVIGRYNIDFSEYAPNKIKKAIVGAGKAEKHQVQQMVKLLMHIKKAISKDESDALATAYTASVNQQIKII.

Residues aspartate 7, glutamate 67, and aspartate 139 contribute to the active site. Positions 7, 67, and 139 each coordinate Mg(2+).

This sequence belongs to the RuvC family. As to quaternary structure, homodimer which binds Holliday junction (HJ) DNA. The HJ becomes 2-fold symmetrical on binding to RuvC with unstacked arms; it has a different conformation from HJ DNA in complex with RuvA. In the full resolvosome a probable DNA-RuvA(4)-RuvB(12)-RuvC(2) complex forms which resolves the HJ. Mg(2+) is required as a cofactor.

The protein localises to the cytoplasm. The catalysed reaction is Endonucleolytic cleavage at a junction such as a reciprocal single-stranded crossover between two homologous DNA duplexes (Holliday junction).. Functionally, the RuvA-RuvB-RuvC complex processes Holliday junction (HJ) DNA during genetic recombination and DNA repair. Endonuclease that resolves HJ intermediates. Cleaves cruciform DNA by making single-stranded nicks across the HJ at symmetrical positions within the homologous arms, yielding a 5'-phosphate and a 3'-hydroxyl group; requires a central core of homology in the junction. The consensus cleavage sequence is 5'-(A/T)TT(C/G)-3'. Cleavage occurs on the 3'-side of the TT dinucleotide at the point of strand exchange. HJ branch migration catalyzed by RuvA-RuvB allows RuvC to scan DNA until it finds its consensus sequence, where it cleaves and resolves the cruciform DNA. This Orientia tsutsugamushi (strain Boryong) (Rickettsia tsutsugamushi) protein is Crossover junction endodeoxyribonuclease RuvC.